The following is a 572-amino-acid chain: DNA mismatch repair protein MutL (572 aa).

It belongs to the DNA mismatch repair MutL/HexB family.

Functionally, this protein is involved in the repair of mismatches in DNA. It is required for dam-dependent methyl-directed DNA mismatch repair. May act as a 'molecular matchmaker', a protein that promotes the formation of a stable complex between two or more DNA-binding proteins in an ATP-dependent manner without itself being part of a final effector complex. The protein is DNA mismatch repair protein MutL of Dictyoglomus turgidum (strain DSM 6724 / Z-1310).